We begin with the raw amino-acid sequence, 4299 residues long: DNA-dependent protein kinase catalytic subunit (4299 aa).

The stretch at 551–590 forms a coiled coil; the sequence is KDLNSTIKKENNNNNNNKNKNNNNNQTLTKEEISKSIKKL. 4 disordered regions span residues 557-577, 613-633, 878-917, and 1206-1230; these read IKKE…NNQT, DEND…DQDN, NSSD…MKFK, and SSSK…EDGT. Composition is skewed to low complexity over residues 562–575, 617–631, 878–893, and 1206–1226; these read NNNN…NNNN, NNSN…NNDQ, NSSD…IDSG, and SSSK…NNNS. S2789 bears the Phosphoserine; by autocatalysis mark. Phosphothreonine; by autocatalysis occurs at positions 2814 and 2822. Residues 2832-2867 are compositionally biased toward low complexity; it reads SSSQSYGGTNNNTGSSQLSSSSSSSGSQSSSQNNSS. Disordered stretches follow at residues 2832 to 2881 and 3535 to 3559; these read SSSQ…PKLI and TTSS…SSSQ. Positions 3031 to 3707 constitute an FAT domain; sequence KIKDISLNSN…YFPFKISSEQ (677 aa). The PI3K/PI4K catalytic domain occupies 3887–4226; it reads FDTNVLVMGS…AKKKLELVNP (340 aa). Positions 3893–3899 are G-loop; the sequence is VMGSLRK. A catalytic loop region spans residues 4092–4100; it reads GIGDRHLEN. Positions 4112–4137 are activation loop; that stretch reads GIDFGHAFGTATQFLPIPELMPFRLT. The 33-residue stretch at 4267–4299 folds into the FATC domain; it reads VCSSVKEQIDCLIDQSTDPNILSRAWVGWNGAL.

The protein belongs to the PI3/PI4-kinase family. DNAPK subfamily. In terms of processing, may be phosphorylated upon DNA damage. Could be autophosphorylated. Autophosphorylation induces a conformational change that leads to remodeling of the DNA-PK complex, requisite for efficient end processing and DNA repair. Post-translationally, autophosphorylated on Ser-2789, Thr-2814 and Thr-2822. Ser-2789 is a DNA damage-inducible phosphorylation site (inducible with ionizing radiation, IR).

The protein localises to the nucleus. It is found in the nucleolus. It carries out the reaction L-seryl-[protein] + ATP = O-phospho-L-seryl-[protein] + ADP + H(+). The enzyme catalyses L-threonyl-[protein] + ATP = O-phospho-L-threonyl-[protein] + ADP + H(+). Its activity is regulated as follows. Inhibited by wortmannin. Activity of the enzyme seems to be attenuated by autophosphorylation. Serine/threonine-protein kinase that acts as a molecular sensor for DNA damage. Is recruited to DNA ends by the Ku70/Ku80 heterodimer and is involved in DNA non-homologous end joining (NHEJ) required for double-strand break (DSB) repair and V(D)J recombination. This activity is only apparent when DNA damage is administered in G1 phase of the cell cycle. Required for efficient signaling of DNA double-stranded breaks via phosphorylation of H2AX during G1. The protein is DNA-dependent protein kinase catalytic subunit (dnapkcs) of Dictyostelium discoideum (Social amoeba).